The chain runs to 261 residues: MRPDGRKPTQLRPVKIIRDFNIYAEGSVLIEMGNTKVIITASIEEKVPPFLRGTGQGWITAEYAMLPRSTESRSIREVVRGAPSGRTQEIQRLIGRSLRGVVDLKKLGERTLWVDCDVIQADGGTRVASITGAFIAVADAMIKLTESGKVRQNPLKDYVAAISTGIVGNEVVLDLNFKEDSSAKVDMNLVMTGSGNFVEVQATGEEYSFTQQEFDKMLEYGKLGINKLIHIQKKFIEGMPSIGHWKRLSIKEFSYTDTGGN.

Phosphate contacts are provided by residues Arg86 and 124-126 (GTR).

Belongs to the RNase PH family. Homohexameric ring arranged as a trimer of dimers.

It catalyses the reaction tRNA(n+1) + phosphate = tRNA(n) + a ribonucleoside 5'-diphosphate. Its function is as follows. Phosphorolytic 3'-5' exoribonuclease that plays an important role in tRNA 3'-end maturation. Removes nucleotide residues following the 3'-CCA terminus of tRNAs; can also add nucleotides to the ends of RNA molecules by using nucleoside diphosphates as substrates, but this may not be physiologically important. Probably plays a role in initiation of 16S rRNA degradation (leading to ribosome degradation) during starvation. This is Ribonuclease PH from Persephonella marina (strain DSM 14350 / EX-H1).